Consider the following 100-residue polypeptide: Urease subunit gamma (100 aa).

The protein belongs to the urease gamma subunit family. As to quaternary structure, heterotrimer of UreA (gamma), UreB (beta) and UreC (alpha) subunits. Three heterotrimers associate to form the active enzyme.

Its subcellular location is the cytoplasm. It carries out the reaction urea + 2 H2O + H(+) = hydrogencarbonate + 2 NH4(+). It functions in the pathway nitrogen metabolism; urea degradation; CO(2) and NH(3) from urea (urease route): step 1/1. The chain is Urease subunit gamma from Methylibium petroleiphilum (strain ATCC BAA-1232 / LMG 22953 / PM1).